Reading from the N-terminus, the 794-residue chain is Sucrose synthase (794 aa).

Residues 263–742 are GT-B glycosyltransferase; sequence MISRLLILSP…ALDRVASRYT (480 aa).

It belongs to the glycosyltransferase 1 family. In terms of assembly, homotetramer.

The catalysed reaction is an NDP-alpha-D-glucose + D-fructose = a ribonucleoside 5'-diphosphate + sucrose + H(+). It catalyses the reaction ADP-alpha-D-glucose + D-fructose = sucrose + ADP + H(+). Its activity is regulated as follows. Inhibited by GDP over 10 mM and by over 2 mM MgCl(2). Catalyzes the reversible conversion of sucrose and a nucleotide disphosphate (NDP) into fructose and NDP-glucose; although the reaction is freely reversible in vitro, the physiological reaction seems to be sucrose cleavage. Unlike characterized plant enzymes prefers ADP as a cosubstrate, whereas plants prefer UDP. The KM for sucrose is 8-fold lower in the presence of ADP than UDP. Its preference for ADP over UDP suggests it may directly link sucrose and glycogen metabolism. The chain is Sucrose synthase (ss2) from Nitrosomonas europaea (strain ATCC 19718 / CIP 103999 / KCTC 2705 / NBRC 14298).